The chain runs to 250 residues: MTALLSPDQLEADLRAIGARLYHDQHPFHALLHHGKLDRGQVQAWALNRFEYQRCIPLKDAAILARMEDPALRRIWRQRILDHDGNSPSDGGIARWLHLTDALGLPRELVESGRALLPGTRFAVQAYLHFVREKSLLEAIASSLTELFAPNIIGQRVAGMLQHYDFVSPEALAYFEHRLTEAPRDSDFALDYVKQHADTIEKQQLVKAALHFKCSVLWAQLDALHVAYVSPGVVWPDAFVPERDSKRAAA.

This sequence belongs to the PqqC family.

The catalysed reaction is 6-(2-amino-2-carboxyethyl)-7,8-dioxo-1,2,3,4,7,8-hexahydroquinoline-2,4-dicarboxylate + 3 O2 = pyrroloquinoline quinone + 2 H2O2 + 2 H2O + H(+). It functions in the pathway cofactor biosynthesis; pyrroloquinoline quinone biosynthesis. Functionally, ring cyclization and eight-electron oxidation of 3a-(2-amino-2-carboxyethyl)-4,5-dioxo-4,5,6,7,8,9-hexahydroquinoline-7,9-dicarboxylic-acid to PQQ. This chain is Pyrroloquinoline-quinone synthase, found in Xanthomonas campestris pv. campestris (strain B100).